A 192-amino-acid polypeptide reads, in one-letter code: Probable GTP-binding protein EngB (192 aa).

Residues 22-192 (QIPEIVFAGR…LLAHLAQYIR (171 aa)) form the EngB-type G domain. Residues 30–37 (GRSNVGKS), 57–61 (GKTRL), 75–78 (DLPG), 142–145 (TKDD), and 172–174 (YSS) contribute to the GTP site. 2 residues coordinate Mg(2+): Ser37 and Thr59.

It belongs to the TRAFAC class TrmE-Era-EngA-EngB-Septin-like GTPase superfamily. EngB GTPase family. The cofactor is Mg(2+).

Functionally, necessary for normal cell division and for the maintenance of normal septation. This chain is Probable GTP-binding protein EngB, found in Chlorobium phaeobacteroides (strain DSM 266 / SMG 266 / 2430).